The primary structure comprises 492 residues: Steroid 21-hydroxylase (492 aa).

Residues Arg-91 and Lys-120 each contribute to the heme b site. Arg-231 contacts 17alpha-hydroxyprogesterone. Progesterone is bound at residue Arg-231. Heme b contacts are provided by His-363, Arg-424, and Cys-426.

The protein belongs to the cytochrome P450 family. It depends on heme b as a cofactor.

The protein localises to the endoplasmic reticulum membrane. It localises to the microsome membrane. The enzyme catalyses 17alpha-hydroxyprogesterone + reduced [NADPH--hemoprotein reductase] + O2 = 11-deoxycortisol + oxidized [NADPH--hemoprotein reductase] + H2O + H(+). It carries out the reaction progesterone + reduced [NADPH--hemoprotein reductase] + O2 = 21-hydroxyprogesterone + oxidized [NADPH--hemoprotein reductase] + H2O + H(+). In terms of biological role, specifically catalyzes the 21-hydroxylation of steroids. Required for the adrenal synthesis of mineralocorticoids and glucocorticoids. The protein is Steroid 21-hydroxylase (CYP21) of Felis catus (Cat).